A 1163-amino-acid polypeptide reads, in one-letter code: Putative beta-glucuronidase (1163 aa).

The signal sequence occupies residues 1 to 20 (MPRFLKYILGLFLISISAFG).

This sequence belongs to the glycosyl hydrolase 2 family.

Its subcellular location is the periplasm. The catalysed reaction is a beta-D-glucuronoside + H2O = D-glucuronate + an alcohol. Its function is as follows. Glycoside hydrolase involved in ulvan degradation. Ulvan is the main polysaccharide component of the Ulvales (green seaweed) cell wall. It is composed of disaccharide building blocks comprising 3-sulfated rhamnose (Rha3S) linked to D-glucuronic acid (GlcA), L-iduronic acid (IduA), or D-xylose (Xyl). The polypeptide is Putative beta-glucuronidase (Formosa agariphila (strain DSM 15362 / KCTC 12365 / LMG 23005 / KMM 3901 / M-2Alg 35-1)).